Consider the following 364-residue polypeptide: Aminomethyltransferase (364 aa).

Belongs to the GcvT family. In terms of assembly, the glycine cleavage system is composed of four proteins: P, T, L and H.

It carries out the reaction N(6)-[(R)-S(8)-aminomethyldihydrolipoyl]-L-lysyl-[protein] + (6S)-5,6,7,8-tetrahydrofolate = N(6)-[(R)-dihydrolipoyl]-L-lysyl-[protein] + (6R)-5,10-methylene-5,6,7,8-tetrahydrofolate + NH4(+). In terms of biological role, the glycine cleavage system catalyzes the degradation of glycine. The sequence is that of Aminomethyltransferase from Thermotoga maritima (strain ATCC 43589 / DSM 3109 / JCM 10099 / NBRC 100826 / MSB8).